Here is a 267-residue protein sequence, read N- to C-terminus: Putative carbamate hydrolase RutD (267 aa).

The AB hydrolase-1 domain occupies P14–L115.

It belongs to the AB hydrolase superfamily. Hydrolase RutD family.

The catalysed reaction is carbamate + 2 H(+) = NH4(+) + CO2. Its function is as follows. Involved in pyrimidine catabolism. May facilitate the hydrolysis of carbamate, a reaction that can also occur spontaneously. This chain is Putative carbamate hydrolase RutD, found in Cronobacter turicensis (strain DSM 18703 / CCUG 55852 / LMG 23827 / z3032).